We begin with the raw amino-acid sequence, 408 residues long: DNA primase DnaG (408 aa).

The region spanning 171–250 is the Toprim domain; the sequence is DAIIIVEGRA…AYSPRGKSVE (80 aa). Mg(2+) contacts are provided by glutamate 177, aspartate 219, and aspartate 221. The disordered stretch occupies residues 276–323; the sequence is AEENVERLPPSAAPAEVRAPAGAGRTSEGERPPRREWDSKPPSTLGEH. Residues 284–298 show a composition bias toward low complexity; that stretch reads PPSAAPAEVRAPAGA. The span at 302–314 shows a compositional bias: basic and acidic residues; it reads SEGERPPRREWDS.

The protein belongs to the archaeal DnaG primase family. Forms a ternary complex with MCM helicase and DNA. Mg(2+) serves as cofactor.

The enzyme catalyses ssDNA + n NTP = ssDNA/pppN(pN)n-1 hybrid + (n-1) diphosphate.. Functionally, RNA polymerase that catalyzes the synthesis of short RNA molecules used as primers for DNA polymerase during DNA replication. The protein is DNA primase DnaG of Methanoculleus marisnigri (strain ATCC 35101 / DSM 1498 / JR1).